The following is a 308-amino-acid chain: Transaldolase (308 aa).

Catalysis depends on K125, which acts as the Schiff-base intermediate with substrate.

The protein belongs to the transaldolase family. Type 1 subfamily. In terms of assembly, homodimer.

The protein resides in the cytoplasm. It carries out the reaction D-sedoheptulose 7-phosphate + D-glyceraldehyde 3-phosphate = D-erythrose 4-phosphate + beta-D-fructose 6-phosphate. It functions in the pathway carbohydrate degradation; pentose phosphate pathway; D-glyceraldehyde 3-phosphate and beta-D-fructose 6-phosphate from D-ribose 5-phosphate and D-xylulose 5-phosphate (non-oxidative stage): step 2/3. Functionally, transaldolase is important for the balance of metabolites in the pentose-phosphate pathway. This is Transaldolase from Pseudomonas putida (strain W619).